The following is a 542-amino-acid chain: Prolyl 3-hydroxylase OGFOD1 (542 aa).

The region spanning 134–239 is the Fe2OG dioxygenase domain; the sequence is DLESTIDMSC…RLSISGWFHG (106 aa). Fe cation is bound by residues histidine 155 and aspartate 157. Tyrosine 169 serves as a coordination point for 2-oxoglutarate. Histidine 218 provides a ligand contact to Fe cation. 2-oxoglutarate is bound at residue arginine 230. The disordered stretch occupies residues 371-435; it reads SEDEPEDKKE…AKKESSVPTC (65 aa). Over residues 395–417 the composition is skewed to polar residues; sequence SHSSSEPENSWAATSDSSLQSEG.

Belongs to the TPA1 family. Monomer. It depends on Fe(2+) as a cofactor. L-ascorbate is required as a cofactor.

The protein resides in the cytoplasm. It localises to the nucleus. The enzyme catalyses [ribosomal protein uS12]-L-proline + 2-oxoglutarate + O2 = [ribosomal protein uS12]-(3S)-3-hydroxy-L-proline + succinate + CO2. Its function is as follows. Prolyl 3-hydroxylase that catalyzes 3-hydroxylation of 'Pro-62' of small ribosomal subunit uS12 (RPS23), thereby regulating protein translation termination efficiency. Involved in stress granule formation. This chain is Prolyl 3-hydroxylase OGFOD1 (OGFOD1), found in Bos taurus (Bovine).